A 1105-amino-acid polypeptide reads, in one-letter code: Ran-binding protein 6 (1105 aa).

Position 2 is an N-acetylalanine (Ala-2). 4 HEAT repeats span residues 219-257 (FKDFADLLPGILQAVNDSCYQDDDSVLESLVEIADTVPK), 361-399 (KVVLPMTKEHIMQMLQSPDWKYRHAGLMALSAIGEGCHQ), 402-440 (ESILDETVNSVLLFLQDPHPRVRAAACTTLGQMATDFAP), and 444-483 (KKFHETVIAALLRTMENQGNQRVQSHAASALIIFIEDCPK). Positions 333 to 383 (DEMEEDDFDSNAVAAESALDRLACGLGGKVVLPMTKEHIMQMLQSPDWKYR) are ran-GTP binding. Residues 806 to 842 (KAKLEGHFKNQELRQVKRQEENYDQQVEMSLQDEDEC) are a coiled coil. HEAT repeat units lie at residues 866-905 (LPWFEQLLPLIVNLICSSRPWPDRQWGLCIFDDIIEHCSP), 908-946 (FKYVEYFRWPMLLNMRDNNPEVRQAAAYGLGVMAQFGGD), and 949-987 (RSLCSEAVPLLVKVIKCANSKTKKNVIATENCISAIGKI).

Belongs to the importin beta family.

The protein localises to the cytoplasm. The protein resides in the nucleus. May function in nuclear protein import as nuclear transport receptor. In Homo sapiens (Human), this protein is Ran-binding protein 6 (RANBP6).